Reading from the N-terminus, the 130-residue chain is Ribosome-binding factor A (130 aa).

The interval R111–R130 is disordered.

It belongs to the RbfA family. Monomer. Binds 30S ribosomal subunits, but not 50S ribosomal subunits or 70S ribosomes.

The protein localises to the cytoplasm. In terms of biological role, one of several proteins that assist in the late maturation steps of the functional core of the 30S ribosomal subunit. Associates with free 30S ribosomal subunits (but not with 30S subunits that are part of 70S ribosomes or polysomes). Required for efficient processing of 16S rRNA. May interact with the 5'-terminal helix region of 16S rRNA. This Xanthomonas oryzae pv. oryzae (strain MAFF 311018) protein is Ribosome-binding factor A.